Consider the following 115-residue polypeptide: NAD(P)H-quinone oxidoreductase subunit M (115 aa).

The protein belongs to the complex I NdhM subunit family. NDH-1 can be composed of about 15 different subunits; different subcomplexes with different compositions have been identified which probably have different functions.

The protein localises to the cellular thylakoid membrane. The enzyme catalyses a plastoquinone + NADH + (n+1) H(+)(in) = a plastoquinol + NAD(+) + n H(+)(out). It catalyses the reaction a plastoquinone + NADPH + (n+1) H(+)(in) = a plastoquinol + NADP(+) + n H(+)(out). In terms of biological role, NDH-1 shuttles electrons from an unknown electron donor, via FMN and iron-sulfur (Fe-S) centers, to quinones in the respiratory and/or the photosynthetic chain. The immediate electron acceptor for the enzyme in this species is believed to be plastoquinone. Couples the redox reaction to proton translocation, and thus conserves the redox energy in a proton gradient. Cyanobacterial NDH-1 also plays a role in inorganic carbon-concentration. The chain is NAD(P)H-quinone oxidoreductase subunit M from Prochlorococcus marinus (strain NATL1A).